The primary structure comprises 211 residues: MERIMSTVSVVNTNNEKVDEIELNDAIFNREVKEYILHDVVRMQRAAKRAGTASTKTRVEVRGGGAKPWRQKGTGRARAGSRTSPLWRGGGVTFGPKPRDYSFKLNRKVRQQAVSMALSARFQEGNLIVLDNFIMDAIKTKEFASTMKTLELANALIVMDDASENLSKSCRNVHGYRILPAEGLNVYDILLHKKVVLVKPVIESLEKRLMV.

Residues 48–89 (KRAGTASTKTRVEVRGGGAKPWRQKGTGRARAGSRTSPLWRG) are disordered.

It belongs to the universal ribosomal protein uL4 family. In terms of assembly, part of the 50S ribosomal subunit.

Functionally, one of the primary rRNA binding proteins, this protein initially binds near the 5'-end of the 23S rRNA. It is important during the early stages of 50S assembly. It makes multiple contacts with different domains of the 23S rRNA in the assembled 50S subunit and ribosome. In terms of biological role, forms part of the polypeptide exit tunnel. The chain is Large ribosomal subunit protein uL4 from Desulfotalea psychrophila (strain LSv54 / DSM 12343).